The primary structure comprises 337 residues: DNA-directed RNA polymerase subunit alpha (337 aa).

The interval 1–233 is alpha N-terminal domain (alpha-NTD); that stretch reads MVREKVTVST…DLFIPFLHAQ (233 aa). The alpha C-terminal domain (alpha-CTD) stretch occupies residues 267–337; that stretch reads IALKYIFIDQ…FTVDLPKNKF (71 aa).

The protein belongs to the RNA polymerase alpha chain family. As to quaternary structure, in plastids the minimal PEP RNA polymerase catalytic core is composed of four subunits: alpha, beta, beta', and beta''. When a (nuclear-encoded) sigma factor is associated with the core the holoenzyme is formed, which can initiate transcription.

It is found in the plastid. The protein localises to the chloroplast. The catalysed reaction is RNA(n) + a ribonucleoside 5'-triphosphate = RNA(n+1) + diphosphate. In terms of biological role, DNA-dependent RNA polymerase catalyzes the transcription of DNA into RNA using the four ribonucleoside triphosphates as substrates. In Platanus occidentalis (Sycamore), this protein is DNA-directed RNA polymerase subunit alpha.